Reading from the N-terminus, the 418-residue chain is tRNA(Met) cytidine acetate ligase (418 aa).

ATP is bound by residues Gly95, Asn161, and Arg186.

It belongs to the TmcAL family.

It is found in the cytoplasm. It carries out the reaction cytidine(34) in elongator tRNA(Met) + acetate + ATP = N(4)-acetylcytidine(34) in elongator tRNA(Met) + AMP + diphosphate. In terms of biological role, catalyzes the formation of N(4)-acetylcytidine (ac(4)C) at the wobble position of elongator tRNA(Met), using acetate and ATP as substrates. First activates an acetate ion to form acetyladenylate (Ac-AMP) and then transfers the acetyl group to tRNA to form ac(4)C34. This Thermotoga maritima (strain ATCC 43589 / DSM 3109 / JCM 10099 / NBRC 100826 / MSB8) protein is tRNA(Met) cytidine acetate ligase.